The primary structure comprises 970 residues: MLQLRLLPTFSMGCHLLAVVALLFSHVDLISAETEMEGEGNETGECTGSYYCKKGVILPIWEPQDPSFGDKIARATVYFVAMVYMFLGVSIIADRFMSSIEVITSQEKEITIKKPNGETTKTTVRIWNETVSNLTLMALGSSAPEILLSVIEVCGHNFTAGDLGPSTIVGSAAFNMFIIIALCVYVVPDGETRKIKHLRVFFVTAAWSIFAYTWLYIILSVISPGVVEVWEGLLTFFFFPICVVFAWVADRRLLFYKYVYKRYRAGKQRGMIIEHEGDRPSSKTEIEMDGKVVNSHVDNFLDGALVLEVDERDQDDEEARREMARILKELKQKHPEKEIEQLIELANYQVLSQQQKSRAFYRIQATRLMTGAGNILKRHAADQARKAVSMHEVNTEVAENDPVSKIFFEQGTYQCLENCGTVALTIIRRGGDLTNTVFVDFRTEDGTANAGSDYEFTEGTVVFKPGETQKEIRVGIIDDDIFEEDENFLVHLSNVKVSSEASEDGILEANHVSALACLGSPSTATVTIFDDDHAGIFTFEEPVTHVSESIGIMEVKVLRTSGARGNVIVPYKTIEGTARGGGEDFEDTCGELEFQNDEIVKTISVKVIDDEEYEKNKTFFLEIGEPRLVEMSEKKALLLNELGGFTITGKYLYGQPVFRKVHAREHPIPSTVITIAEEYDDKQPLTSKEEEERRIAEMGRPILGEHTKLEVIIEESYEFKSTVDKLIKKTNLALVVGTNSWREQFIEAITVSAGEDDDDDECGEEKLPSCFDYVMHFLTVFWKVLFAFVPPTEYWNGWACFIVSILMIGILTAFIGDLASHFGCTIGLKDSVTAVVFVALGTSVPDTFASKVAATQDQYADASIGNVTGSNAVNVFLGIGVAWSIAAIYHAANGEQFKVSPGTLAFSVTLFTIFAFINVGVLLYRRRPEIGGELGGPRTAKLLTSCLFVLLWLLYIFFSSLEAYCHIKGF.

Positions 1-32 are cleaved as a signal peptide; the sequence is MLQLRLLPTFSMGCHLLAVVALLFSHVDLISA. Residues 33-71 are Extracellular-facing; it reads ETEMEGEGNETGECTGSYYCKKGVILPIWEPQDPSFGDK. N-linked (GlcNAc...) asparagine glycosylation is present at Asn-41. A helical transmembrane segment spans residues 72–92; it reads IARATVYFVAMVYMFLGVSII. Residues 93–133 lie on the Cytoplasmic side of the membrane; it reads ADRFMSSIEVITSQEKEITIKKPNGETTKTTVRIWNETVSN. Residues 134 to 154 traverse the membrane as a helical segment; sequence LTLMALGSSAPEILLSVIEVC. An Alpha-1 repeat occupies 138-178; that stretch reads ALGSSAPEILLSVIEVCGHNFTAGDLGPSTIVGSAAFNMFI. The Extracellular segment spans residues 155-167; that stretch reads GHNFTAGDLGPST. Asn-157 is a glycosylation site (N-linked (GlcNAc...) asparagine). A helical membrane pass occupies residues 168–188; it reads IVGSAAFNMFIIIALCVYVVP. The Cytoplasmic segment spans residues 189–201; the sequence is DGETRKIKHLRVF. Residues 202–222 traverse the membrane as a helical segment; the sequence is FVTAAWSIFAYTWLYIILSVI. At 223–228 the chain is on the extracellular side; the sequence is SPGVVE. Residues 229–249 form a helical membrane-spanning segment; the sequence is VWEGLLTFFFFPICVVFAWVA. Residues 250–797 are Cytoplasmic-facing; it reads DRRLLFYKYV…FVPPTEYWNG (548 aa). The putative calmodulin-binding region stretch occupies residues 251–270; the sequence is RRLLFYKYVYKRYRAGKQRG. Phosphoserine occurs at positions 282 and 389. Calx-beta domains lie at 393-493 and 524-624; these read VNTE…VHLS and ATVT…LEIG. Residues Glu-417, Asp-453, Asp-478, Asp-479, Ile-481, Glu-483, Glu-486, Asp-530, Asp-531, Asp-532, Glu-548, Asp-584, Asp-610, Glu-611, Glu-612, and Glu-715 each contribute to the Ca(2+) site. Residues 798 to 818 form a helical membrane-spanning segment; sequence WACFIVSILMIGILTAFIGDL. Topologically, residues 819–821 are extracellular; it reads ASH. A helical transmembrane segment spans residues 822–842; sequence FGCTIGLKDSVTAVVFVALGT. The Alpha-2 repeat unit spans residues 839–875; that stretch reads ALGTSVPDTFASKVAATQDQYADASIGNVTGSNAVNV. Residues 843-871 lie on the Cytoplasmic side of the membrane; the sequence is SVPDTFASKVAATQDQYADASIGNVTGSN. Residues 872–892 form a helical membrane-spanning segment; that stretch reads AVNVFLGIGVAWSIAAIYHAA. At 893-903 the chain is on the extracellular side; sequence NGEQFKVSPGT. A helical transmembrane segment spans residues 904–924; sequence LAFSVTLFTIFAFINVGVLLY. Over 925 to 941 the chain is Cytoplasmic; it reads RRRPEIGGELGGPRTAK. The chain crosses the membrane as a helical span at residues 942–962; the sequence is LLTSCLFVLLWLLYIFFSSLE. The Extracellular segment spans residues 963-970; it reads AYCHIKGF.

Belongs to the Ca(2+):cation antiporter (CaCA) (TC 2.A.19) family. SLC8 subfamily. In terms of tissue distribution, cardiac sarcolemma (at protein level).

The protein resides in the cell membrane. It localises to the sarcolemma. It carries out the reaction Ca(2+)(in) + 3 Na(+)(out) = Ca(2+)(out) + 3 Na(+)(in). Activated by micromolar levels of Ca(2+). In the absence of regulatory Ca(2+), channels open rapidly, and then inactivate rapidly. Inactivation is enhanced by Na(+) and is inhibited by micromolar levels of Ca(2+). Its function is as follows. Mediates the exchange of one Ca(2+) ion against three to four Na(+) ions across the cell membrane, and thereby contributes to the regulation of cytoplasmic Ca(2+) levels and Ca(2+)-dependent cellular processes. Contributes to Ca(2+) transport during excitation-contraction coupling in muscle. In a first phase, voltage-gated channels mediate the rapid increase of cytoplasmic Ca(2+) levels due to release of Ca(2+) stores from the endoplasmic reticulum. SLC8A1 mediates the export of Ca(2+) from the cell during the next phase, so that cytoplasmic Ca(2+) levels rapidly return to baseline. Required for normal embryonic heart development and the onset of heart contractions. The polypeptide is Sodium/calcium exchanger 1 (SLC8A1) (Canis lupus familiaris (Dog)).